Reading from the N-terminus, the 122-residue chain is Seripauperin-5 (122 aa).

A helical transmembrane segment spans residues 7-24; the sequence is IAAGVAAIAAGASAAATT.

It belongs to the SRP1/TIP1 family. Seripauperin subfamily.

It localises to the membrane. In Saccharomyces cerevisiae (strain ATCC 204508 / S288c) (Baker's yeast), this protein is Seripauperin-5 (PAU5).